The sequence spans 526 residues: Protein DETOXIFICATION 43 (526 aa).

At 1-36 (MTETGDDLATVKKPIPFLVIFKDLRHVFSRDTTGRE) the chain is on the cytoplasmic side. A helical transmembrane segment spans residues 37–57 (ILGIAFPAALALAADPIASLI). The Extracellular segment spans residues 58–59 (DT). The chain crosses the membrane as a helical span at residues 60 to 80 (AFVGRLGAVQLAAVGVSIAIF). The Cytoplasmic portion of the chain corresponds to 81 to 170 (NQASRITIFP…NKKEKRTIRT (90 aa)). Residues 133–166 (ISSPTSNDTNQPQQPPAPDTKSNSGNKSNKKEKR) form a disordered region. A compositionally biased stretch (polar residues) spans 134-144 (SSPTSNDTNQP). A helical transmembrane segment spans residues 171 to 191 (ASTAMILGLILGLVQAIFLIF). The Extracellular portion of the chain corresponds to 192–215 (SSKLLLGVMGVKPNSPMLSPAHKY). The helical transmembrane segment at 216-236 (LSIRALGAPALLLSLAMQGIF) threads the bilayer. Residues 237-244 (RGFKDTKT) lie on the Cytoplasmic side of the membrane. Residues 245 to 267 (PLFATVVADVINIVLDPIFIFVL) form a helical membrane-spanning segment. Over 268–270 (RLG) the chain is Extracellular. A helical transmembrane segment spans residues 271-293 (IIGAAIAHVISQYFMTLILFVFL). Residues 294-316 (AKKVNLIPPNFGDLQFGRFLKNG) lie on the Cytoplasmic side of the membrane. The helical transmembrane segment at 317 to 337 (LLLLARTIAVTFCQTLAAAMA) threads the bilayer. Residues 338-353 (ARLGTTPMAAFQICLQ) lie on the Extracellular side of the membrane. Residues 354-374 (VWLTSSLLNDGLAVAGQAILA) traverse the membrane as a helical segment. Residues 375-396 (CSFAEKDYNKVTAVASRVLQMG) lie on the Cytoplasmic side of the membrane. Residues 397–417 (FVLGLGLSVFVGLGLYFGAGV) traverse the membrane as a helical segment. The Extracellular portion of the chain corresponds to 418–426 (FSKDPAVIH). The chain crosses the membrane as a helical span at residues 427 to 447 (LMAIGIPFIAATQPINSLAFV). Residues 448-457 (LDGVNFGASD) lie on the Cytoplasmic side of the membrane. Residues 458 to 478 (FAYTAYSMVGVAAISIAAVIY) form a helical membrane-spanning segment. The Extracellular segment spans residues 479-484 (MAKTNG). Residues 485–505 (FIGIWIALTIYMALRAITGIA) traverse the membrane as a helical segment. The Cytoplasmic portion of the chain corresponds to 506 to 526 (RMATGTGPWRFLRGRSSSSSS).

This sequence belongs to the multi antimicrobial extrusion (MATE) (TC 2.A.66.1) family. As to expression, expressed in roots in the pericycle and cells internal to the pericycle and surrounding the vascular tissue. Also expressed in seed and flower.

Its subcellular location is the cell membrane. Functionally, citrate transporter responsible for loading citrate into xylem tissues, which helps facilitate iron transport to shoots. Mediates the citrate release in the apoplastic spaces during plant development allowing iron nutrition between symplastically disconnected tissues. The sequence is that of Protein DETOXIFICATION 43 from Arabidopsis thaliana (Mouse-ear cress).